A 649-amino-acid chain; its full sequence is Solute carrier family 22 member 16 (649 aa).

A helical transmembrane segment spans residues 19–39; sequence FQIVLYLICAYQSLSCGIHYL. N-linked (GlcNAc...) asparagine glycosylation is found at N65 and N108. 5 consecutive transmembrane segments (helical) span residues 156-176, 190-210, 214-234, 244-264, and 268-288; these read MIQPLIIFGVMLGSITFSYLS, IGVFFFGIASLFIFDYLSFMI, FLVMASSGYFVVVFVYVMEII, IHLNTFFAIGAMLVALASYLL, and WLYQIILCIVTTPFILCCWML. An N-linked (GlcNAc...) asparagine glycan is attached at N315. The next 6 helical transmembrane spans lie at 356–376, 389–409, 417–437, 445–465, 475–495, and 501–521; these read AKMTLIVWLDWFTANLGYYMF, LYLLLVGAMEIPAYICLCIWL, TMLLFLLVSSLTCMLHVVMPS, MVALLVKSVISSVFAFIYLYT, CLAVGSSNMVSHVSSIFIPFT, and VWIFLPQILFGILAILSGLLS. The span at 530–544 shows a compositional bias: polar residues; it reads TPMKSTWETTEQQVP. Disordered stretches follow at residues 530–560 and 579–649; these read TPMKSTWETTEQQVPENKDSLGEGPPDSFER and SPDA…LGGF.

It belongs to the major facilitator (TC 2.A.1) superfamily. Organic cation transporter (TC 2.A.1.19) family.

The protein resides in the cell membrane. It carries out the reaction (R)-carnitine(in) = (R)-carnitine(out). It catalyses the reaction spermidine(in) = spermidine(out). In terms of biological role, facilitative organic cation transporter that mediates the transport of carnitine as well as the polyamine spermidine. Mediates the partially Na(+)-dependent bidirectional transport of carnitine. May mediate L-carnitine secretion from testis epididymal epithelium into the lumen which is involved in the maturation of spermatozoa. The chain is Solute carrier family 22 member 16 from Mus musculus (Mouse).